We begin with the raw amino-acid sequence, 310 residues long: Uridine phosphorylase 1 (310 aa).

Phosphate is bound by residues G60, R94, and 138-141 (RIGT). Residues 142–143 (SG) and 217–219 (QGR) contribute to the uridine site.

The protein belongs to the PNP/UDP phosphorylase family. In terms of assembly, homodimer.

It catalyses the reaction uridine + phosphate = alpha-D-ribose 1-phosphate + uracil. The catalysed reaction is 2'-deoxyuridine + phosphate = 2-deoxy-alpha-D-ribose 1-phosphate + uracil. The protein operates within pyrimidine metabolism; UMP biosynthesis via salvage pathway; uracil from uridine (phosphorylase route): step 1/1. Catalyzes the reversible phosphorylytic cleavage of uridine to uracil and ribose-1-phosphate which can then be utilized as carbon and energy sources or in the rescue of pyrimidine bases for nucleotide synthesis. Shows broad substrate specificity and can also accept deoxyuridine and other analogous compounds. This chain is Uridine phosphorylase 1, found in Homo sapiens (Human).